A 103-amino-acid polypeptide reads, in one-letter code: 4-amino-4-deoxychorismate mutase (103 aa).

The Chorismate mutase domain maps to 1-92 (MTEQNELQRL…EMCRVEDLVM (92 aa)).

The catalysed reaction is 4-amino-4-deoxychorismate = 4-amino-4-deoxyprephenate. It participates in antibiotic biosynthesis. In terms of biological role, involved in chloramphenicol biosynthesis. Probably catalyzes the conversion of 4-amino-4-deoxychorismate to 4-amino-4-deoxyprephenate. The sequence is that of 4-amino-4-deoxychorismate mutase from Streptomyces venezuelae (strain ATCC 10712 / CBS 650.69 / DSM 40230 / JCM 4526 / NBRC 13096 / PD 04745).